Here is a 713-residue protein sequence, read N- to C-terminus: Cyclomaltodextrin glucanotransferase (713 aa).

Residues 1 to 27 (MKKFLKSTAALALGLSLTFGLFSPAQA) form the signal peptide. The A1 stretch occupies residues 28 to 165 (APDTSVSNKQ…NIKVIIDFAP (138 aa)). Ca(2+) contacts are provided by Asp54, Asn56, Asn59, and Asn60. Cys70 and Cys77 form a disulfide bridge. 2 residues coordinate Ca(2+): Gly78 and Asp80. Position 127 to 128 (127 to 128 (YW)) interacts with substrate. Asn166 contacts Ca(2+). Residues 166-229 (NHTSPASSDQ…NLYDLADLNH (64 aa)) are b. Residues His167 and 172–174 (SSD) each bind substrate. Ile217 provides a ligand contact to Ca(2+). 220–223 (NLYD) is a substrate binding site. Asp226 provides a ligand contact to Ca(2+). The tract at residues 230–433 (NNSTVDVYLK…LRKCNPAIAY (204 aa)) is A2. Position 254 (Arg254) interacts with substrate. Residue Asp256 is the Nucleophile of the active site. 259-260 (KH) contributes to the substrate binding site. His260 serves as a coordination point for Ca(2+). Glu284 acts as the Proton donor in catalysis. Ala342 provides a ligand contact to Ca(2+). Substrate is bound by residues His354, Asp398, and Arg402. Positions 434–522 (GSTQERWINN…GTAVWQYTAA (89 aa)) are c. The interval 523–609 (TATPTIGHVG…SNVYDNFEVL (87 aa)) is d. Residues 526–607 (PTIGHVGPMM…TASNVYDNFE (82 aa)) enclose the IPT/TIG domain. Asp604 serves as a coordination point for Ca(2+). The CBM20 domain maps to 608–713 (VLSGDQVSVR…TATINVNWQP (106 aa)). Positions 610 to 713 (SGDQVSVRFV…TATINVNWQP (104 aa)) are e.

The protein belongs to the glycosyl hydrolase 13 family. As to quaternary structure, monomer. Ca(2+) serves as cofactor.

Its subcellular location is the secreted. It catalyses the reaction Cyclizes part of a (1-&gt;4)-alpha-D-glucan chain by formation of a (1-&gt;4)-alpha-D-glucosidic bond.. The protein is Cyclomaltodextrin glucanotransferase (cgt) of Niallia circulans (Bacillus circulans).